The sequence spans 566 residues: DNA ligase B (566 aa).

Residue lysine 125 is the N6-AMP-lysine intermediate of the active site.

Belongs to the NAD-dependent DNA ligase family. LigB subfamily.

The enzyme catalyses NAD(+) + (deoxyribonucleotide)n-3'-hydroxyl + 5'-phospho-(deoxyribonucleotide)m = (deoxyribonucleotide)n+m + AMP + beta-nicotinamide D-nucleotide.. Functionally, catalyzes the formation of phosphodiester linkages between 5'-phosphoryl and 3'-hydroxyl groups in double-stranded DNA using NAD as a coenzyme and as the energy source for the reaction. The polypeptide is DNA ligase B (Pseudomonas putida (strain ATCC 47054 / DSM 6125 / CFBP 8728 / NCIMB 11950 / KT2440)).